The following is a 363-amino-acid chain: Cytoplasmic tRNA 2-thiolation protein 1 (363 aa).

A disordered region spans residues 337–363 (DGDCEQQATRSERNRSSLQGKHGNFDF).

Belongs to the TtcA family. CTU1/NCS6/ATPBD3 subfamily.

The protein localises to the cytoplasm. It functions in the pathway tRNA modification; 5-methoxycarbonylmethyl-2-thiouridine-tRNA biosynthesis. Plays a central role in 2-thiolation of mcm(5)S(2)U at tRNA wobble positions of tRNA(Lys), tRNA(Glu) and tRNA(Gln). Directly binds tRNAs and probably acts by catalyzing adenylation of tRNAs, an intermediate required for 2-thiolation. It is unclear whether it acts as a sulfurtransferase that transfers sulfur from thiocarboxylated URM1 onto the uridine of tRNAs at wobble position. This chain is Cytoplasmic tRNA 2-thiolation protein 1, found in Oryza sativa subsp. japonica (Rice).